We begin with the raw amino-acid sequence, 191 residues long: Protein GrpE (191 aa).

It belongs to the GrpE family. In terms of assembly, homodimer.

Its subcellular location is the cytoplasm. Its function is as follows. Participates actively in the response to hyperosmotic and heat shock by preventing the aggregation of stress-denatured proteins, in association with DnaK and GrpE. It is the nucleotide exchange factor for DnaK and may function as a thermosensor. Unfolded proteins bind initially to DnaJ; upon interaction with the DnaJ-bound protein, DnaK hydrolyzes its bound ATP, resulting in the formation of a stable complex. GrpE releases ADP from DnaK; ATP binding to DnaK triggers the release of the substrate protein, thus completing the reaction cycle. Several rounds of ATP-dependent interactions between DnaJ, DnaK and GrpE are required for fully efficient folding. The polypeptide is Protein GrpE (Listeria monocytogenes serotype 4b (strain CLIP80459)).